Consider the following 275-residue polypeptide: WIMGHMVNEIYQIDEFVDLGANSIETDITFDDDAMAEYSYHGVPCGCMRWCHKWEYVNDFLEGLRRATTPGDSKYRKQLILVVFDLKTGDLSSSTAYKGGKLFAEKLLRYYWNGGSNGGRAYIIISIPDIDHYAFISGFRDALKKSGHEDLLAKVGYDFSGNDDLNSIRSALHKAGVKDREHVWQSDGITNCLLRSLDRVNEAVKNRDSSNGYISKMYYWTIEKYATVRDALNAEVDGIMTNYPDVIVNVLNEDSFKNRFRMATFDDNPWELFKR.

Histidine 5 is an active-site residue. Mg(2+) contacts are provided by glutamate 25 and aspartate 27. Histidine 41 (nucleophile) is an active-site residue. Intrachain disulfides connect cysteine 45–cysteine 51 and cysteine 47–cysteine 192. Aspartate 85 lines the Mg(2+) pocket.

The protein belongs to the arthropod phospholipase D family. Class II subfamily. Mg(2+) serves as cofactor. Expressed by the venom gland.

The protein localises to the secreted. It carries out the reaction an N-(acyl)-sphingosylphosphocholine = an N-(acyl)-sphingosyl-1,3-cyclic phosphate + choline. It catalyses the reaction an N-(acyl)-sphingosylphosphoethanolamine = an N-(acyl)-sphingosyl-1,3-cyclic phosphate + ethanolamine. The enzyme catalyses a 1-acyl-sn-glycero-3-phosphocholine = a 1-acyl-sn-glycero-2,3-cyclic phosphate + choline. The catalysed reaction is a 1-acyl-sn-glycero-3-phosphoethanolamine = a 1-acyl-sn-glycero-2,3-cyclic phosphate + ethanolamine. Its function is as follows. Dermonecrotic toxins cleave the phosphodiester linkage between the phosphate and headgroup of certain phospholipids (sphingolipid and lysolipid substrates), forming an alcohol (often choline) and a cyclic phosphate. This toxin acts on sphingomyelin (SM). It may also act on ceramide phosphoethanolamine (CPE), lysophosphatidylcholine (LPC) and lysophosphatidylethanolamine (LPE), but not on lysophosphatidylserine (LPS), and lysophosphatidylglycerol (LPG). It acts by transphosphatidylation, releasing exclusively cyclic phosphate products as second products. Induces dermonecrosis, hemolysis, increased vascular permeability, edema, inflammatory response, and platelet aggregation. The polypeptide is Dermonecrotic toxin LamSicTox-alphaIV1iii (Loxosceles amazonica (Recluse spider)).